Here is a 1070-residue protein sequence, read N- to C-terminus: MPKRDDIKTILVIGSGPIVIGQAAEFDYAGTQACLSLKEEGYRVVLVNSNPATIMTDAEMADKVYIEPITLDFVSRIIRKERPDAILPTLGGQTGLNMAMELSAAGILDECNVEVLGTDLTAIKKAEDREAFRDLMNELGEPVPESDIIHNLDEAYTFVERIGYPVIVRPAYTLGGSGGGICHNEQELIETVTSGLKLSPVTQCLLEKSIAGFKEVEYEVMRDANNNAMVVCNMENIDPVGIHTGDSIVVAPSQTLSDREYQLLRDVSLKIIRALEIEGGCNVQLALDPDSYNYYVIEVNPRVSRSSALASKATGYPIAKLAAKIAVGLTLDEVRNPVTGTTFAHFEPTLDYVVAKIPRFAFDKFEQADRRLGTQMKATGEVMAIGRSWEEALLKAVRSLEIGADHLLLEEAENADEATLERKICFPEDDRLFFLAAALRRGQTIEQLHAKTKIDLFFLYKLSKTIELENRIKENPQNQEILAEAKRAGFSDAFLATCWNVDEQAIYDLRKAQNLFPVYKMVDTCAAEFESTTPYFYSTYEEENESTRSAKESVIVLGSGPIRIGQGVEFDYATVHSVWAIQQAGYEAIIINNNPETVSTDFSISDKLYFEPLTLEDVMHVIEIEQPLGVVVQFGGQTAINLADGLAKRGVKILGTSLEDTDRAENRDAFEKALEILQIPQPAGKTATSVEEAINVATDIGYPVLVRPSYVLGGRAMEIVESEEALKHYMTNAVKVNPKHPVLVDRYVSGQEVEVDAISDGENVLIPGIMEHIERAGVHSGDSIAVYPAQRLSSQVKNTIVDYTTRLATGLNIIGMLNIQYVVDGEEVFVIEVNPRSSRTAPFLSKITEIPMANVATRVILGENLIDLGYTPGLAPEKQEIFVKVPVFSFAKLRSVDTSLGPEMKSTGEVMGKDVTLEKALYKGFVASGTTMHDYGTVLLTVADRDKEEAVELAKRFNRIGFTIMATKGTASTLEEANIPVSQVKKIGENQETLIDYIRNGQVTLVVNTLTTGKRPERDGFQIRRESVENGIPVCTSLDTAEAILRVLESRSFELESMNASEVKQPKARV.

The interval 1–401 (MPKRDDIKTI…ALLKAVRSLE (401 aa)) is carboxyphosphate synthetic domain. Residues R129, R169, G175, G176, K208, I210, E215, G241, I242, H243, Q284, and E298 each contribute to the ATP site. The 195-residue stretch at 133–327 (RDLMNELGEP…IAKLAAKIAV (195 aa)) folds into the ATP-grasp 1 domain. Mg(2+)-binding residues include Q284, E298, and N300. Mn(2+) is bound by residues Q284, E298, and N300. An oligomerization domain region spans residues 402 to 546 (IGADHLLLEE…YSTYEEENES (145 aa)). A carbamoyl phosphate synthetic domain region spans residues 547–929 (TRSAKESVIV…ALYKGFVASG (383 aa)). The region spanning 671–861 (EKALEILQIP…MANVATRVIL (191 aa)) is the ATP-grasp 2 domain. Residues R707, R746, V748, E752, G777, V778, H779, S780, Q820, and E832 each contribute to the ATP site. Q820, E832, and N834 together coordinate Mg(2+). Residues Q820, E832, and N834 each coordinate Mn(2+). One can recognise an MGS-like domain in the interval 930 to 1070 (TTMHDYGTVL…SEVKQPKARV (141 aa)). The segment at 930-1070 (TTMHDYGTVL…SEVKQPKARV (141 aa)) is allosteric domain.

Belongs to the CarB family. As to quaternary structure, composed of two chains; the small (or glutamine) chain promotes the hydrolysis of glutamine to ammonia, which is used by the large (or ammonia) chain to synthesize carbamoyl phosphate. Tetramer of heterodimers (alpha,beta)4. Requires Mg(2+) as cofactor. Mn(2+) serves as cofactor.

It carries out the reaction hydrogencarbonate + L-glutamine + 2 ATP + H2O = carbamoyl phosphate + L-glutamate + 2 ADP + phosphate + 2 H(+). The enzyme catalyses hydrogencarbonate + NH4(+) + 2 ATP = carbamoyl phosphate + 2 ADP + phosphate + 2 H(+). It functions in the pathway amino-acid biosynthesis; L-arginine biosynthesis; carbamoyl phosphate from bicarbonate: step 1/1. The protein operates within pyrimidine metabolism; UMP biosynthesis via de novo pathway; (S)-dihydroorotate from bicarbonate: step 1/3. In terms of biological role, large subunit of the glutamine-dependent carbamoyl phosphate synthetase (CPSase). CPSase catalyzes the formation of carbamoyl phosphate from the ammonia moiety of glutamine, carbonate, and phosphate donated by ATP, constituting the first step of 2 biosynthetic pathways, one leading to arginine and/or urea and the other to pyrimidine nucleotides. The large subunit (synthetase) binds the substrates ammonia (free or transferred from glutamine from the small subunit), hydrogencarbonate and ATP and carries out an ATP-coupled ligase reaction, activating hydrogencarbonate by forming carboxy phosphate which reacts with ammonia to form carbamoyl phosphate. The protein is Carbamoyl phosphate synthase large chain of Listeria monocytogenes serotype 4b (strain F2365).